A 305-amino-acid chain; its full sequence is tRNA dimethylallyltransferase (305 aa).

8–15 (GPTAVGKT) contributes to the ATP binding site. 10-15 (TAVGKT) provides a ligand contact to substrate. The interaction with substrate tRNA stretch occupies residues 33-36 (DSRQ).

The protein belongs to the IPP transferase family. In terms of assembly, monomer. Mg(2+) is required as a cofactor.

It catalyses the reaction adenosine(37) in tRNA + dimethylallyl diphosphate = N(6)-dimethylallyladenosine(37) in tRNA + diphosphate. Catalyzes the transfer of a dimethylallyl group onto the adenine at position 37 in tRNAs that read codons beginning with uridine, leading to the formation of N6-(dimethylallyl)adenosine (i(6)A). This chain is tRNA dimethylallyltransferase, found in Thermotoga sp. (strain RQ2).